Consider the following 747-residue polypeptide: Protein FAM83C (747 aa).

The segment at 1 to 309 (MFGGPGPGVL…LYAESQPVEG (309 aa)) is DUF1669. 7 disordered regions span residues 322–352 (LRPP…SSIK), 374–412 (TGVV…LYRA), 462–484 (LSRF…GRWV), 517–550 (AREV…SPSQ), 588–633 (NQSR…LGHS), 646–672 (GEGP…DEKR), and 692–715 (ARQG…DLVR). Residues 328–350 (ALAFRPDVPSPTSSLPSSTSLSS) show a composition bias toward low complexity. Over residues 390 to 402 (GQPSLHRQLSDPN) the composition is skewed to polar residues. The span at 697–707 (EPGGPKGGHLN) shows a compositional bias: gly residues.

This sequence belongs to the FAM83 family. As to quaternary structure, may interact with RAF1. Phosphorylated in vitro by CSNK1A1.

The protein resides in the cytoplasm. May play a role in MAPK signaling. This is Protein FAM83C from Homo sapiens (Human).